Consider the following 151-residue polypeptide: uncharacterized protein (151 aa).

Polar residues predominate over residues 40 to 57; it reads QMNRRNSENNTFDASNVG. Residues 40-125 are disordered; sequence QMNRRNSENN…KRQPHYAEPI (86 aa). Low complexity predominate over residues 83–110; sequence QRQNGRQHQHAGQQQPQHQHTQSQTRQT.

This is an uncharacterized protein from Bacillus subtilis (strain 168).